Here is a 256-residue protein sequence, read N- to C-terminus: MSNITMKELLEAGVHFGHQTKRWNPKMKPYIFGARNGIYIIDLQKTVRLFKGAYNFVVDAAQSGETMLFVGTKKQAQDSVSEEAQRCGMFYVNDRWLGGMLTNFSTVKQSIDRLKRLDAMVADGTIEAYTKKEALQMEKDRQKLEKTLGGIKGMNKLPGVLFVIDPKNEEIAVSEAKKLGIPVVAIVDTNCDPDDIDYVIPGNDDAIRAIRLLTSKVADAMIEGGQARNIKLQTDTEGAEFAAEAEGVVEETAGEA.

Belongs to the universal ribosomal protein uS2 family.

In Geotalea uraniireducens (strain Rf4) (Geobacter uraniireducens), this protein is Small ribosomal subunit protein uS2.